Here is a 120-residue protein sequence, read N- to C-terminus: MARATNAPQSRKRRKRLLRDARGFRGRRSKLFRYAKDALYKARYWSYRDRKNRKREFRALWIQRINAACRKRGMTYSRFMEALRKAGIGVNRKMLAELAVRSQEDFDQIFKLAKEGNLAS.

The protein belongs to the bacterial ribosomal protein bL20 family.

Functionally, binds directly to 23S ribosomal RNA and is necessary for the in vitro assembly process of the 50S ribosomal subunit. It is not involved in the protein synthesizing functions of that subunit. This is Large ribosomal subunit protein bL20 from Methylacidiphilum infernorum (isolate V4) (Methylokorus infernorum (strain V4)).